Reading from the N-terminus, the 284-residue chain is Bifunctional protein FolD (284 aa).

Residues 166 to 168 and Ile232 contribute to the NADP(+) site; that span reads GAS.

Belongs to the tetrahydrofolate dehydrogenase/cyclohydrolase family. In terms of assembly, homodimer.

It carries out the reaction (6R)-5,10-methylene-5,6,7,8-tetrahydrofolate + NADP(+) = (6R)-5,10-methenyltetrahydrofolate + NADPH. The enzyme catalyses (6R)-5,10-methenyltetrahydrofolate + H2O = (6R)-10-formyltetrahydrofolate + H(+). It participates in one-carbon metabolism; tetrahydrofolate interconversion. Functionally, catalyzes the oxidation of 5,10-methylenetetrahydrofolate to 5,10-methenyltetrahydrofolate and then the hydrolysis of 5,10-methenyltetrahydrofolate to 10-formyltetrahydrofolate. The chain is Bifunctional protein FolD from Pseudomonas paraeruginosa (strain DSM 24068 / PA7) (Pseudomonas aeruginosa (strain PA7)).